The primary structure comprises 132 residues: Small ribosomal subunit protein uS8 (132 aa).

It belongs to the universal ribosomal protein uS8 family. As to quaternary structure, part of the 30S ribosomal subunit. Contacts proteins S5 and S12.

One of the primary rRNA binding proteins, it binds directly to 16S rRNA central domain where it helps coordinate assembly of the platform of the 30S subunit. The chain is Small ribosomal subunit protein uS8 from Clavibacter michiganensis subsp. michiganensis (strain NCPPB 382).